Reading from the N-terminus, the 325-residue chain is Solute-binding protein Bpro_4736 (325 aa).

The signal sequence occupies residues methionine 1–alanine 27. Arginine 168 to tyrosine 173 is a binding site for phenylglyoxylate.

This sequence belongs to the bacterial solute-binding protein 7 family. As to quaternary structure, the complex is comprised of an extracytoplasmic solute-binding protein and a heteromeric permease formed by two transmembrane proteins.

Its subcellular location is the periplasm. Its function is as follows. Solute-binding protein that binds phenylglyoxylate (in vitro). Probably part of a tripartite ATP-independent periplasmic (TRAP) transport system that mediates solute transport into the cytoplasm. The chain is Solute-binding protein Bpro_4736 from Polaromonas sp. (strain JS666 / ATCC BAA-500).